The chain runs to 124 residues: S-adenosylmethionine decarboxylase proenzyme (124 aa).

The active-site Schiff-base intermediate with substrate; via pyruvic acid is serine 63. A Pyruvic acid (Ser); by autocatalysis modification is found at serine 63. Residue histidine 68 is the Proton acceptor; for processing activity of the active site. The active-site Proton donor; for catalytic activity is the cysteine 83.

Belongs to the prokaryotic AdoMetDC family. Type 1 subfamily. In terms of assembly, heterotetramer of two alpha and two beta chains arranged as a dimer of alpha/beta heterodimers. Requires pyruvate as cofactor. Is synthesized initially as an inactive proenzyme. Formation of the active enzyme involves a self-maturation process in which the active site pyruvoyl group is generated from an internal serine residue via an autocatalytic post-translational modification. Two non-identical subunits are generated from the proenzyme in this reaction, and the pyruvate is formed at the N-terminus of the alpha chain, which is derived from the carboxyl end of the proenzyme. The post-translation cleavage follows an unusual pathway, termed non-hydrolytic serinolysis, in which the side chain hydroxyl group of the serine supplies its oxygen atom to form the C-terminus of the beta chain, while the remainder of the serine residue undergoes an oxidative deamination to produce ammonia and the pyruvoyl group blocking the N-terminus of the alpha chain.

It carries out the reaction S-adenosyl-L-methionine + H(+) = S-adenosyl 3-(methylsulfanyl)propylamine + CO2. It participates in amine and polyamine biosynthesis; S-adenosylmethioninamine biosynthesis; S-adenosylmethioninamine from S-adenosyl-L-methionine: step 1/1. Its function is as follows. Catalyzes the decarboxylation of S-adenosylmethionine to S-adenosylmethioninamine (dcAdoMet), the propylamine donor required for the synthesis of the polyamines spermine and spermidine from the diamine putrescine. The sequence is that of S-adenosylmethionine decarboxylase proenzyme from Caldanaerobacter subterraneus subsp. tengcongensis (strain DSM 15242 / JCM 11007 / NBRC 100824 / MB4) (Thermoanaerobacter tengcongensis).